A 304-amino-acid polypeptide reads, in one-letter code: UDP-3-O-acyl-N-acetylglucosamine deacetylase (304 aa).

The Zn(2+) site is built by His78, His237, and Asp241. The Proton donor role is filled by His264.

Belongs to the LpxC family. Zn(2+) is required as a cofactor.

The enzyme catalyses a UDP-3-O-[(3R)-3-hydroxyacyl]-N-acetyl-alpha-D-glucosamine + H2O = a UDP-3-O-[(3R)-3-hydroxyacyl]-alpha-D-glucosamine + acetate. It functions in the pathway glycolipid biosynthesis; lipid IV(A) biosynthesis; lipid IV(A) from (3R)-3-hydroxytetradecanoyl-[acyl-carrier-protein] and UDP-N-acetyl-alpha-D-glucosamine: step 2/6. Functionally, catalyzes the hydrolysis of UDP-3-O-myristoyl-N-acetylglucosamine to form UDP-3-O-myristoylglucosamine and acetate, the committed step in lipid A biosynthesis. This chain is UDP-3-O-acyl-N-acetylglucosamine deacetylase, found in Nitrosococcus oceani (strain ATCC 19707 / BCRC 17464 / JCM 30415 / NCIMB 11848 / C-107).